We begin with the raw amino-acid sequence, 549 residues long: Glucose-6-phosphate isomerase (549 aa).

Glutamate 355 serves as the catalytic Proton donor. Residues histidine 386 and lysine 514 contribute to the active site.

The protein belongs to the GPI family.

The protein localises to the cytoplasm. The enzyme catalyses alpha-D-glucose 6-phosphate = beta-D-fructose 6-phosphate. It participates in carbohydrate biosynthesis; gluconeogenesis. Its pathway is carbohydrate degradation; glycolysis; D-glyceraldehyde 3-phosphate and glycerone phosphate from D-glucose: step 2/4. Catalyzes the reversible isomerization of glucose-6-phosphate to fructose-6-phosphate. The chain is Glucose-6-phosphate isomerase from Salmonella choleraesuis (strain SC-B67).